A 337-amino-acid chain; its full sequence is Low-density lipoprotein receptor class A domain-containing protein 3 (337 aa).

The N-terminal stretch at Met1–Ser13 is a signal peptide. At Gln14–Thr169 the chain is on the extracellular side. The N-linked (GlcNAc...) asparagine glycan is linked to Asn20. LDL-receptor class A domains lie at Glu24 to Pro61, Arg66 to Thr103, and Leu108 to His144. Intrachain disulfides connect Cys25–Cys38, Cys33–Cys51, Cys45–Cys60, Cys67–Cys80, Cys74–Cys93, Cys87–Cys102, Cys109–Cys121, Cys116–Cys134, and Cys128–Cys143. A glycan (N-linked (GlcNAc...) asparagine) is linked at Asn101. A helical membrane pass occupies residues Tyr170–Leu190. The Cytoplasmic segment spans residues His191 to Val337. Residues Gln243–Ser253 show a composition bias toward polar residues. The segment at Gln243–Val337 is disordered. Residues Arg291–Thr303 are compositionally biased toward low complexity.

It belongs to the LDLR family.

It localises to the cell membrane. The polypeptide is Low-density lipoprotein receptor class A domain-containing protein 3 (Xenopus tropicalis (Western clawed frog)).